Reading from the N-terminus, the 714-residue chain is Calpain-1 catalytic subunit (714 aa).

Serine 2 bears the N-acetylserine mark. In terms of domain architecture, Calpain catalytic spans leucine 55–threonine 354. Ca(2+) is bound by residues glutamine 109 and aspartate 114. Residues cysteine 115, histidine 272, and asparagine 296 contribute to the active site. 3 residues coordinate Ca(2+): asparagine 316, aspartate 318, and aspartate 323. The residue at position 354 (threonine 354) is a Phosphothreonine. The segment at proline 355–aspartate 526 is domain III. The tract at residues glutamine 527 to glutamate 542 is linker. 4 consecutive EF-hand domains span residues glutamate 541–lysine 576, phenylalanine 585–arginine 618, asparagine 615–lysine 650, and valine 680–alanine 714. The segment at isoleucine 543–phenylalanine 713 is domain IV. Ca(2+) is bound by residues aspartate 598, aspartate 600, asparagine 602, lysine 604, glutamate 609, aspartate 628, aspartate 630, serine 632, serine 634, and glutamate 639.

Belongs to the peptidase C2 family. As to quaternary structure, forms a heterodimer with a small (regulatory) subunit CAPNS1. The cofactor is Ca(2+). Undergoes calcium-induced successive autoproteolytic cleavages that generate a membrane-bound 78 kDa active form and an intracellular 75 kDa active form. Calpastatin reduces with high efficiency the transition from 78 kDa to 75 kDa calpain forms. Ubiquitous.

The protein localises to the cytoplasm. It localises to the cell membrane. The catalysed reaction is Broad endopeptidase specificity.. With respect to regulation, activated by micromolar concentrations of calcium and inhibited by calpastatin. Calcium-regulated non-lysosomal thiol-protease which catalyzes limited proteolysis of substrates involved in cytoskeletal remodeling and signal transduction. Proteolytically cleaves CTBP1 at 'Asn-375', 'Gly-387' and 'His-409'. Cleaves and activates caspase-7 (CASP7). The polypeptide is Calpain-1 catalytic subunit (Homo sapiens (Human)).